Reading from the N-terminus, the 110-residue chain is Protein YcgL (110 aa).

The region spanning 14 to 98 is the YcgL domain; sequence MFCVIYRSSK…PPEDLLKQHL (85 aa). The segment at 88 to 110 is disordered; it reads PPPEDLLKQHLSSVGQNTSPADR. Positions 97–110 are enriched in polar residues; sequence HLSSVGQNTSPADR.

This Salmonella paratyphi A (strain ATCC 9150 / SARB42) protein is Protein YcgL.